The sequence spans 417 residues: NADH-quinone oxidoreductase subunit D (417 aa).

It belongs to the complex I 49 kDa subunit family. As to quaternary structure, NDH-1 is composed of 14 different subunits. Subunits NuoB, C, D, E, F, and G constitute the peripheral sector of the complex.

Its subcellular location is the cell inner membrane. It catalyses the reaction a quinone + NADH + 5 H(+)(in) = a quinol + NAD(+) + 4 H(+)(out). NDH-1 shuttles electrons from NADH, via FMN and iron-sulfur (Fe-S) centers, to quinones in the respiratory chain. The immediate electron acceptor for the enzyme in this species is believed to be ubiquinone. Couples the redox reaction to proton translocation (for every two electrons transferred, four hydrogen ions are translocated across the cytoplasmic membrane), and thus conserves the redox energy in a proton gradient. This chain is NADH-quinone oxidoreductase subunit D, found in Burkholderia mallei (strain NCTC 10247).